Consider the following 487-residue polypeptide: Aromatic-L-amino-acid decarboxylase (487 aa).

N-acetylmethionine is present on M1. 2 consecutive repeat copies span residues 58–115 (EDIE…TELE) and 118–178 (MMDW…MQAA). Residues 58 to 178 (EDIEKIIMPG…AASPELMQAA (121 aa)) are 2 X approximate tandem repeats. T82 serves as a coordination point for substrate. A148 and S149 together coordinate pyridoxal 5'-phosphate. Position 192 (H192) interacts with substrate. Pyridoxal 5'-phosphate is bound by residues T246 and N300. K303 is modified (N6-(pyridoxal phosphate)lysine).

The protein belongs to the group II decarboxylase family. As to quaternary structure, homodimer. Pyridoxal 5'-phosphate serves as cofactor.

The catalysed reaction is L-dopa + H(+) = dopamine + CO2. It carries out the reaction 5-hydroxy-L-tryptophan + H(+) = serotonin + CO2. It participates in catecholamine biosynthesis; dopamine biosynthesis; dopamine from L-tyrosine: step 2/2. In terms of biological role, catalyzes the decarboxylation of L-3,4-dihydroxyphenylalanine (DOPA) to dopamine and L-5-hydroxytryptophan to serotonin. The sequence is that of Aromatic-L-amino-acid decarboxylase (DDC) from Bos taurus (Bovine).